Here is a 131-residue protein sequence, read N- to C-terminus: C-C motif chemokine 21 (131 aa).

An N-terminal signal peptide occupies residues 1 to 23 (MAQSLALSLLILVLAFGIPGTQG). 3 disulfide bridges follow: C31/C57, C32/C75, and C103/C119. Residues 89 to 131 (HLDKTPTPRKPVQGCRKDRGVPKNGKKGKGCKRTEQSQTPKGP) are disordered.

The protein belongs to the intercrine beta (chemokine CC) family. As to quaternary structure, monomer. Binds to CCR7. Interacts with PDPN; relocalizes PDPN to the basolateral membrane. Interacts with TNFAIP6 (via Link domain). Interacts with GPR174.

It is found in the secreted. Inhibits hemopoiesis and stimulates chemotaxis. Chemotactic in vitro for thymocytes and activated T-cells, but not for B-cells, macrophages, or neutrophils. Shows preferential activity towards naive T-cells. May play a role in mediating homing of lymphocytes to secondary lymphoid organs. Binds to atypical chemokine receptor ACKR4 and mediates the recruitment of beta-arrestin (ARRB1/2) to ACKR4. The polypeptide is C-C motif chemokine 21 (CCL21) (Macaca mulatta (Rhesus macaque)).